The chain runs to 177 residues: Large ribosomal subunit protein uL6 (177 aa).

It belongs to the universal ribosomal protein uL6 family. As to quaternary structure, part of the 50S ribosomal subunit.

This protein binds to the 23S rRNA, and is important in its secondary structure. It is located near the subunit interface in the base of the L7/L12 stalk, and near the tRNA binding site of the peptidyltransferase center. The polypeptide is Large ribosomal subunit protein uL6 (Paramagnetospirillum magneticum (strain ATCC 700264 / AMB-1) (Magnetospirillum magneticum)).